A 635-amino-acid polypeptide reads, in one-letter code: 1-deoxy-D-xylulose-5-phosphate synthase (635 aa).

Thiamine diphosphate is bound by residues histidine 78 and 119-121 (GHA). Residue aspartate 150 participates in Mg(2+) binding. Thiamine diphosphate-binding positions include 151–152 (GS), asparagine 179, phenylalanine 291, and glutamate 376. Asparagine 179 is a Mg(2+) binding site.

This sequence belongs to the transketolase family. DXPS subfamily. As to quaternary structure, homodimer. It depends on Mg(2+) as a cofactor. Requires thiamine diphosphate as cofactor.

It catalyses the reaction D-glyceraldehyde 3-phosphate + pyruvate + H(+) = 1-deoxy-D-xylulose 5-phosphate + CO2. Its pathway is metabolic intermediate biosynthesis; 1-deoxy-D-xylulose 5-phosphate biosynthesis; 1-deoxy-D-xylulose 5-phosphate from D-glyceraldehyde 3-phosphate and pyruvate: step 1/1. Functionally, catalyzes the acyloin condensation reaction between C atoms 2 and 3 of pyruvate and glyceraldehyde 3-phosphate to yield 1-deoxy-D-xylulose-5-phosphate (DXP). The sequence is that of 1-deoxy-D-xylulose-5-phosphate synthase from Chlorobaculum tepidum (strain ATCC 49652 / DSM 12025 / NBRC 103806 / TLS) (Chlorobium tepidum).